We begin with the raw amino-acid sequence, 603 residues long: UvrABC system protein C (603 aa).

The 78-residue stretch at 15-92 (DQPGCYLMKD…IKKHDPRFNI (78 aa)) folds into the GIY-YIG domain. Residues 197 to 232 (KTVKNDLMKKMQEAAENMEFEKAGEFRDQINAIETT) enclose the UVR domain.

Belongs to the UvrC family. In terms of assembly, interacts with UvrB in an incision complex.

The protein resides in the cytoplasm. The UvrABC repair system catalyzes the recognition and processing of DNA lesions. UvrC both incises the 5' and 3' sides of the lesion. The N-terminal half is responsible for the 3' incision and the C-terminal half is responsible for the 5' incision. This Listeria monocytogenes serovar 1/2a (strain ATCC BAA-679 / EGD-e) protein is UvrABC system protein C.